A 245-amino-acid chain; its full sequence is Pathogenesis-related thaumatin-like protein 3.6 (245 aa).

An N-terminal signal peptide occupies residues 1–19 (GSIPFWIALIASFSVFLQG). 8 disulfides stabilise this stretch: cysteine 33/cysteine 226, cysteine 74/cysteine 84, cysteine 89/cysteine 95, cysteine 142/cysteine 215, cysteine 148/cysteine 198, cysteine 156/cysteine 166, cysteine 170/cysteine 179, and cysteine 180/cysteine 185. An N-linked (GlcNAc...) asparagine glycan is attached at asparagine 90. The N-linked (GlcNAc...) asparagine glycan is linked to asparagine 186.

It belongs to the thaumatin family. Mostly expressed in strobili, and, to a lower extent, in roots of seedlings and saplings.

May be involved in disease resistance. The chain is Pathogenesis-related thaumatin-like protein 3.6 from Cryptomeria japonica (Japanese cedar).